A 336-amino-acid polypeptide reads, in one-letter code: F420-dependent glucose-6-phosphate dehydrogenase (336 aa).

D39 is a coenzyme F420-(gamma-Glu)n binding site. H40 acts as the Proton donor in catalysis. Residues T76 and 107–108 contribute to the coenzyme F420-(gamma-Glu)n site; that span reads TG. The active-site Proton acceptor is E109. Coenzyme F420-(gamma-Glu)n contacts are provided by residues N112, 177–178, and 180–181; these read GG and EV. Substrate contacts are provided by T195, K198, K259, and R283.

Belongs to the F420-dependent glucose-6-phosphate dehydrogenase family. Homodimer.

The catalysed reaction is oxidized coenzyme F420-(gamma-L-Glu)(n) + D-glucose 6-phosphate + H(+) = 6-phospho-D-glucono-1,5-lactone + reduced coenzyme F420-(gamma-L-Glu)(n). Catalyzes the coenzyme F420-dependent oxidation of glucose 6-phosphate (G6P) to 6-phosphogluconolactone. Appears to have a role in resistance to oxidative stress, via its consumption of G6P that serves as a source of reducing power to combat oxidative stress in mycobacteria. This Mycobacterium leprae (strain Br4923) protein is F420-dependent glucose-6-phosphate dehydrogenase.